The following is a 150-amino-acid chain: 6,7-dimethyl-8-ribityllumazine synthase (150 aa).

Residues phenylalanine 11, 43–45 (VFD), and 67–69 (AVI) contribute to the 5-amino-6-(D-ribitylamino)uracil site. 72-73 (AT) contributes to the (2S)-2-hydroxy-3-oxobutyl phosphate binding site. Histidine 75 functions as the Proton donor in the catalytic mechanism. Leucine 100 contacts 5-amino-6-(D-ribitylamino)uracil. A (2S)-2-hydroxy-3-oxobutyl phosphate-binding site is contributed by arginine 115.

It belongs to the DMRL synthase family.

It catalyses the reaction (2S)-2-hydroxy-3-oxobutyl phosphate + 5-amino-6-(D-ribitylamino)uracil = 6,7-dimethyl-8-(1-D-ribityl)lumazine + phosphate + 2 H2O + H(+). Its pathway is cofactor biosynthesis; riboflavin biosynthesis; riboflavin from 2-hydroxy-3-oxobutyl phosphate and 5-amino-6-(D-ribitylamino)uracil: step 1/2. Functionally, catalyzes the formation of 6,7-dimethyl-8-ribityllumazine by condensation of 5-amino-6-(D-ribitylamino)uracil with 3,4-dihydroxy-2-butanone 4-phosphate. This is the penultimate step in the biosynthesis of riboflavin. The chain is 6,7-dimethyl-8-ribityllumazine synthase from Pyrobaculum calidifontis (strain DSM 21063 / JCM 11548 / VA1).